We begin with the raw amino-acid sequence, 428 residues long: Flotillin-1 (428 aa).

Phosphoserine occurs at positions 19, 163, and 385. The residue at position 387 (T387) is a Phosphothreonine.

Belongs to the band 7/mec-2 family. Flotillin subfamily. Heterooligomeric complex of flotillin-1 and flotillin-2 and caveolin-1 and caveolin-2. Interacts with ECPAS. High expression in brain, white adipose tissue, heart muscle, skeletal muscle and lung. Low expression in spleen, liver and testis.

The protein resides in the cell membrane. It is found in the endosome. It localises to the membrane. The protein localises to the caveola. Its subcellular location is the melanosome. The protein resides in the membrane raft. Its function is as follows. May act as a scaffolding protein within caveolar membranes, functionally participating in formation of caveolae or caveolae-like vesicles. The protein is Flotillin-1 (Flot1) of Mus musculus (Mouse).